Reading from the N-terminus, the 373-residue chain is Securin (373 aa).

Over residues 1-10 (MMPANEDKEN) the composition is skewed to basic and acidic residues. Residues 1 to 27 (MMPANEDKENNIVYTGNESSGINFPQT) form a disordered region. A compositionally biased stretch (polar residues) spans 12 to 26 (IVYTGNESSGINFPQ). Residues 85-88 (RLPL) carry the D-box motif. Residues 177 to 278 (ADSGKNEESS…LPYVPEGYSP (102 aa)) are disordered. Phosphoserine is present on residues serine 185, serine 186, serine 212, and serine 213. Residues 185-194 (SSDDDEGNED) are compositionally biased toward acidic residues. Low complexity predominate over residues 225–235 (LFNEQGGLQQL). Residues 240 to 256 (TKNEQKTKNDKSDKTDD) are compositionally biased toward basic and acidic residues. Serine 277 bears the Phosphoserine mark. Phosphoserine; by CDC28 is present on serine 292.

The protein belongs to the securin family. As to quaternary structure, interacts with the caspase-like ESP1, and prevents its protease activity probably by covering its active site. Interacts with CDC20. In terms of processing, phosphorylated by CDC28. The phosphorylation may be important for ESP1 localization to the nucleus. Post-translationally, ubiquitinated by the anaphase promoting complex (APC) at the onset of anaphase, conducting to its degradation.

Its subcellular location is the cytoplasm. The protein localises to the nucleus. Its function is as follows. Regulatory protein, which plays a central role in chromosome stability. Probably acts by blocking the action of key proteins. During the mitosis, it blocks Separase/ESP1 function, preventing the proteolysis of the cohesin complex and the subsequent segregation of the chromosomes. At the onset of anaphase, it is ubiquitinated, conducting to its destruction and to the liberation of ESP1. The sequence is that of Securin (PDS1) from Saccharomyces cerevisiae (strain ATCC 204508 / S288c) (Baker's yeast).